We begin with the raw amino-acid sequence, 1062 residues long: Inversin (1062 aa).

16 ANK repeats span residues 13 to 42, 47 to 76, 80 to 110, 113 to 144, 148 to 177, 181 to 213, 220 to 250, 254 to 283, 288 to 317, 321 to 350, 356 to 385, 389 to 418, 422 to 451, 455 to 484, 488 to 517, and 523 to 553; these read SLAS…ALRD, FGRT…DVNK, SRRT…WMQK, EEMT…EVDT, NKQT…NIGI, EGKI…TESL, EGRT…NITS, LFRT…SGTI, QGAT…VKDD, EGRT…DIDI, YGGT…QVDA, MKHT…RVDL, DGHS…NPNV, AGRT…DPNI, EGRT…FPNQ, and ERYT…SIAA. A 3-hydroxyasparagine modification is found at Asn75. A D-box 1 motif is present at residues 490-498; sequence RTALHWSCN. Residues 555–584 form the IQ 1 domain; that stretch reads QDIAAFKIQAVYKGYKVRKAFRDRKNLLMK. The span at 589–608 shows a compositional bias: basic and acidic residues; sequence RKDAAAKKREEENKRKEAEQ. Positions 589–849 are disordered; sequence RKDAAAKKRE…QDKLIGGVSS (261 aa). Polar residues-rich tracts occupy residues 636-658 and 676-689; these read QNEG…TVQS and QGDS…TASR. Over residues 690-700 the composition is skewed to basic and acidic residues; it reads KPSETPIEHCR. Positions 713 to 724 are enriched in polar residues; that stretch reads GGNSSKNQGTSS. Composition is skewed to basic and acidic residues over residues 725–741 and 775–788; these read VEKR…RCEE and DHPR…DRAA. The D-box 2 signature appears at 907–915; it reads RKELFRRKN. The 30-residue stretch at 914-943 folds into the IQ 2 domain; that stretch reads KNKAAAVIQRAWRSYQLRKHLSRLLHLKQL. A disordered region spans residues 1042-1062; the sequence is RSKKFSYNLQPSSQSKNKPKL. The span at 1046–1062 shows a compositional bias: polar residues; sequence FSYNLQPSSQSKNKPKL.

In terms of assembly, interacts with microtubules. Interacts with NPHP1. Interacts with DVL1, PRICKLE (PRICKLE1 or PRICKLE2) and Strabismus (VANGL1 or VANGL2). Binds calmodulin via its IQ domains. Interacts with APC2. Interacts with alpha-, beta-, and gamma-catenin. Interacts with N-cadherin (CDH2). Interacts with NPHP3. Interacts with IQCB1; the interaction likely requires additional interactors. Component of a complex containing at least ANKS6, INVS, NEK8 and NPHP3. ANKS6 may organize complex assembly by linking INVS and NPHP3 to NEK8 and INVS may target the complex to the proximal ciliary axoneme. May be ubiquitinated via its interaction with APC2. Post-translationally, hydroxylated at Asn-75, most probably by HIF1AN. Strongly expressed in the primary cilia of renal cells, especially in the varicosities, swellings observed in the cilia. Localizes in the node monocilia and in other 9+0 monocilia, including those of kidney epithelial cells and the pituitary gland, but it does not localize to 9+2 cilia (at protein level). In adult, it is expressed at high level in liver and kidney. Weakly or not expressed in other tissues.

It localises to the cytoplasm. Its subcellular location is the cytoskeleton. It is found in the membrane. The protein localises to the nucleus. The protein resides in the perinuclear region. It localises to the spindle. Required for normal renal development and establishment of left-right axis. Probably acts as a molecular switch between different Wnt signaling pathways. Inhibits the canonical Wnt pathway by targeting cytoplasmic disheveled (DVL1) for degradation by the ubiquitin-proteasome. This suggests that it is required in renal development to oppose the repression of terminal differentiation of tubular epithelial cells by Wnt signaling. Involved in the organization of apical junctions in kidney cells together with NPHP1, NPHP4 and RPGRIP1L/NPHP8. Does not seem to be strictly required for ciliogenesis. This chain is Inversin (Invs), found in Mus musculus (Mouse).